The primary structure comprises 144 residues: Nucleoside diphosphate kinase (144 aa).

Positions 11, 59, 87, 93, 104, and 114 each coordinate ATP. His117 serves as the catalytic Pros-phosphohistidine intermediate.

Belongs to the NDK family. In terms of assembly, homotetramer. Mg(2+) serves as cofactor.

The protein localises to the cytoplasm. The enzyme catalyses a 2'-deoxyribonucleoside 5'-diphosphate + ATP = a 2'-deoxyribonucleoside 5'-triphosphate + ADP. It catalyses the reaction a ribonucleoside 5'-diphosphate + ATP = a ribonucleoside 5'-triphosphate + ADP. Its function is as follows. Major role in the synthesis of nucleoside triphosphates other than ATP. The ATP gamma phosphate is transferred to the NDP beta phosphate via a ping-pong mechanism, using a phosphorylated active-site intermediate. This chain is Nucleoside diphosphate kinase, found in Aliivibrio fischeri (strain ATCC 700601 / ES114) (Vibrio fischeri).